The chain runs to 214 residues: Ribosomal RNA small subunit methyltransferase G (214 aa).

S-adenosyl-L-methionine-binding positions include G58, 109 to 110, and R126; that span reads AE.

This sequence belongs to the methyltransferase superfamily. RNA methyltransferase RsmG family.

It localises to the cytoplasm. Its function is as follows. Specifically methylates the N7 position of a guanine in 16S rRNA. This chain is Ribosomal RNA small subunit methyltransferase G, found in Ureaplasma parvum serovar 3 (strain ATCC 700970).